The following is a 103-amino-acid chain: Glycoprotein 24B (103 aa).

It belongs to the csb family. In terms of processing, O-glycosylated.

It localises to the cell surface. In terms of biological role, cell-cell adhesion during early development. The chain is Glycoprotein 24B (csbB) from Dictyostelium discoideum (Social amoeba).